Consider the following 125-residue polypeptide: Probable mercury resistance operon repressor (125 aa).

One can recognise an HTH arsR-type domain in the interval 15–109 (VPCTHPDTTA…LARCLAADNA (95 aa)). The H-T-H motif DNA-binding region spans 49–68 (SAECVEHAGISQPRVSVHLS). Residues Cys-69, Cys-73, and Cys-114 each coordinate Hg(2+).

In terms of biological role, negatively regulates the mercuric reductase merA and the organolyase merB in the absence of mercuric ions. The protein is Probable mercury resistance operon repressor (merR) of Streptomyces lividans.